The primary structure comprises 1755 residues: Transposon Ty1-BL Gag-Pol polyprotein (1755 aa).

Composition is skewed to polar residues over residues 20–31, 46–55, and 137–168; these read SVTSKEVQTTQD, VSTQANSQQP, and VGTH…TNQH. Disordered stretches follow at residues 20–84, 137–173, and 350–420; these read SVTS…QNGP, VGTH…RPPP, and QQES…IRGS. The segment at 299-401 is RNA-binding; the sequence is NNGIPINNKV…NSQSRTARAH (103 aa). The segment covering 363–372 has biased composition (basic and acidic residues); that stretch reads SPSDEKKDSR. Residues 373 to 411 show a composition bias toward polar residues; that stretch reads TYTNTTKPKSITRNSQKPNNSQSRTARAHNVSTFNNSPG. Catalysis depends on aspartate 461, which acts as the For protease activity; shared with dimeric partner. Positions 583–640 are integrase-type zinc finger-like; that stretch reads NVHTSESTRKYPYPFIHRMLAHANAQTIRYSLKNNTITYFNESDVDWSSAIDYQCPDC. The Integrase catalytic domain occupies 660 to 835; it reads NSYEPFQYLH…AGLDISTLLP (176 aa). Mg(2+) is bound by residues aspartate 671 and aspartate 736. The tract at residues 956-1172 is disordered; it reads SKAVSPTDST…LGGIGDSNAY (217 aa). Low complexity predominate over residues 960–969; that stretch reads SPTDSTPPST. 2 stretches are compositionally biased toward polar residues: residues 1005–1017 and 1031–1043; these read STPQ…STDS and MSQS…SYAS. The span at 1044–1053 shows a compositional bias: basic and acidic residues; sequence KSKDFRHSDS. Composition is skewed to polar residues over residues 1054–1082 and 1095–1106; these read YSDN…QTSE and SIDTSSSESNSL. The Bipartite nuclear localization signal motif lies at 1178 to 1212; that stretch reads KKRSLEDNETEIKVSRDTWNTKNMRSLEPPRSKKR. The region spanning 1338 to 1476 is the Reverse transcriptase Ty1/copia-type domain; that stretch reads NNYHITQLDI…DILGLEIKYQ (139 aa). Positions 1346, 1427, 1428, 1610, 1652, and 1685 each coordinate Mg(2+). Residues 1610-1752 enclose the RNase H Ty1/copia-type domain; that stretch reads DASYGNQPYY…IKTFKLLTNK (143 aa).

In terms of assembly, the capsid protein forms a homotrimer, from which the VLPs are assembled. The protease is a homodimer, whose active site consists of two apposed aspartic acid residues. Initially, virus-like particles (VLPs) are composed of the structural unprocessed proteins Gag and Gag-Pol, and also contain the host initiator methionine tRNA (tRNA(i)-Met) which serves as a primer for minus-strand DNA synthesis, and a dimer of genomic Ty RNA. Processing of the polyproteins occurs within the particle and proceeds by an ordered pathway, called maturation. First, the protease (PR) is released by autocatalytic cleavage of the Gag-Pol polyprotein yielding capsid protein p45 and a Pol-p154 precursor protein. This cleavage is a prerequisite for subsequent processing of Pol-p154 at the remaining sites to release the mature structural and catalytic proteins. Maturation takes place prior to the RT reaction and is required to produce transposition-competent VLPs.

The protein localises to the cytoplasm. Its subcellular location is the nucleus. The catalysed reaction is DNA(n) + a 2'-deoxyribonucleoside 5'-triphosphate = DNA(n+1) + diphosphate. It catalyses the reaction Endonucleolytic cleavage to 5'-phosphomonoester.. Its function is as follows. Capsid protein (CA) is the structural component of the virus-like particle (VLP), forming the shell that encapsulates the retrotransposons dimeric RNA genome. The particles are assembled from trimer-clustered units and there are holes in the capsid shells that allow for the diffusion of macromolecules. CA also has nucleocapsid-like chaperone activity, promoting primer tRNA(i)-Met annealing to the multipartite primer-binding site (PBS), dimerization of Ty1 RNA and initiation of reverse transcription. In terms of biological role, the aspartyl protease (PR) mediates the proteolytic cleavages of the Gag and Gag-Pol polyproteins after assembly of the VLP. Reverse transcriptase/ribonuclease H (RT) is a multifunctional enzyme that catalyzes the conversion of the retro-elements RNA genome into dsDNA within the VLP. The enzyme displays a DNA polymerase activity that can copy either DNA or RNA templates, and a ribonuclease H (RNase H) activity that cleaves the RNA strand of RNA-DNA heteroduplexes during plus-strand synthesis and hydrolyzes RNA primers. The conversion leads to a linear dsDNA copy of the retrotransposon that includes long terminal repeats (LTRs) at both ends. Functionally, integrase (IN) targets the VLP to the nucleus, where a subparticle preintegration complex (PIC) containing at least integrase and the newly synthesized dsDNA copy of the retrotransposon must transit the nuclear membrane. Once in the nucleus, integrase performs the integration of the dsDNA into the host genome. This Saccharomyces cerevisiae (strain ATCC 204508 / S288c) (Baker's yeast) protein is Transposon Ty1-BL Gag-Pol polyprotein (TY1B-BL).